Here is a 127-residue protein sequence, read N- to C-terminus: Ribonuclease P protein component 1 (127 aa).

It belongs to the eukaryotic/archaeal RNase P protein component 1 family. In terms of assembly, consists of a catalytic RNA component and at least 5 protein subunits. Forms a heterodimeric subcomplex with Rnp4. Reconstituted enzyme missing individual protein subunits is suboptimally active, showing each subunit contributes to optimization of activity.

It is found in the cytoplasm. The enzyme catalyses Endonucleolytic cleavage of RNA, removing 5'-extranucleotides from tRNA precursor.. Its function is as follows. Part of ribonuclease P (RNase P), a protein complex that generates mature tRNA molecules by cleaving their 5'-ends. Binds RNase P RNA. In Pyrococcus horikoshii (strain ATCC 700860 / DSM 12428 / JCM 9974 / NBRC 100139 / OT-3), this protein is Ribonuclease P protein component 1.